Consider the following 568-residue polypeptide: MAASAFLLITSFLLILMLLAKPLGNIIANLIDGDIPRWLTKIESGLWRCCGLQKPGGTVKEMNWWQYALAITIFNLTGLLLLFTLLVTQHALPLNPEHFPGLKWDLALNTAISFITNTDWQAYSGENTLSYFSQMTGLTVQNFLSAATGIAVAFALIRTFSRHGVNTAGNAWVDITRITLYLLLPLSMVIALVFVSQGVIQNFEPYQLAHTIEGQPQLIPMGPVASQEAIKLLGTNGGGFFGANSSHPFENPTAISNFIQILSIFLIPCALCFAFGQVVGDNRQGHTLLWAMSIIFVIATVGVMYAELKGNLHFSLLGANSNINMEGKENRFGILATSIYAVVTTAASCGAVNAMHDSFTALGGMIPMWLIQIGEVVFGGVGSGLYGMLLFVLLTVFIAGLMIGRAPEYLGKKIEVFEMKMVALAILVTPTLALLGTALTISTASGRAGILNPGAHGFSEVLYALSSTANNNGSAFAGLNTNNMFYNLLLAIILFLGRFGMILPVLAIAGSLAVKKRQPASNGTLPTYGPLFISLLILTIMLIGALTFIPALILGPVIEHLQIWLMAR.

The next 12 helical transmembrane spans lie at 7–27 (LLITSFLLILMLLAKPLGNII), 67–87 (YALAITIFNLTGLLLLFTLLV), 137–157 (GLTVQNFLSAATGIAVAFALI), 180–200 (LYLLLPLSMVIALVFVSQGVI), 258–278 (FIQILSIFLIPCALCFAFGQV), 288–308 (LLWAMSIIFVIATVGVMYAEL), 332–352 (FGILATSIYAVVTTAASCGAV), 361–381 (ALGGMIPMWLIQIGEVVFGGV), 384–404 (GLYGMLLFVLLTVFIAGLMIG), 421–441 (MVALAILVTPTLALLGTALTI), 488–508 (LLLAIILFLGRFGMILPVLAI), and 535–555 (LLILTIMLIGALTFIPALILG).

Belongs to the KdpA family. In terms of assembly, the system is composed of three essential subunits: KdpA, KdpB and KdpC.

Its subcellular location is the cell inner membrane. Its function is as follows. Part of the high-affinity ATP-driven potassium transport (or Kdp) system, which catalyzes the hydrolysis of ATP coupled with the electrogenic transport of potassium into the cytoplasm. This subunit binds the periplasmic potassium ions and delivers the ions to the membrane domain of KdpB through an intramembrane tunnel. This is Potassium-transporting ATPase potassium-binding subunit from Photorhabdus laumondii subsp. laumondii (strain DSM 15139 / CIP 105565 / TT01) (Photorhabdus luminescens subsp. laumondii).